A 231-amino-acid polypeptide reads, in one-letter code: Ion-translocating oxidoreductase complex subunit E (231 aa).

6 helical membrane-spanning segments follow: residues 18–38 (ALVQ…ATNA), 39–59 (LGLG…ISTL), 63–83 (TPAE…VSAV), 86–106 (LINA…PLIV), 125–145 (ALSA…MFVL), and 182–202 (PFLL…MLAG).

It belongs to the NqrDE/RnfAE family. The complex is composed of six subunits: RsxA, RsxB, RsxC, RsxD, RsxE and RsxG.

It localises to the cell inner membrane. Its function is as follows. Part of a membrane-bound complex that couples electron transfer with translocation of ions across the membrane. Required to maintain the reduced state of SoxR. In Shigella flexneri serotype 5b (strain 8401), this protein is Ion-translocating oxidoreductase complex subunit E.